A 457-amino-acid chain; its full sequence is MSTVSDPNSSNPPESAGNIRPEPIFREINAEQTDEIVEVESACMNCFETGVTRLLPTKIPFFREVVLMSFKCDHCGHINNEMQSASEIQKSGIRIELRVQSVADLNRRVVRSDNSSISIPEIELEIPVQSQKGEVTTVEGIIERTIAGLSQDQEKRRIDHPETAASIEKYIERLHRLKEVTTPFQVLLEDISGNSFIENPLAPAADPQLKTSYFTRSQQQNEQLGLYEQNHEEQHLLKPIAEDSWPIENLHGEVLQFPTNCPSCQAPCETNMKLTNIPHFKEVVIMATVCGACGHKTNEVKSGGGVEAQGVRFRVQIASREDLTRDVLKSETCSMSIPELDLEVGPHALCGRFTTVEGLLVAMRDQLDGTLFHDSADDATKQQMQRFLDTFEDVMNLKRVITLVLEDPAGNTYVQSLSDDDSEPDDKLTVERYDRSYEDNEDLGLNDMKTEGYEEKA.

Residues 1–13 are compositionally biased toward polar residues; it reads MSTVSDPNSSNPP. The tract at residues 1-21 is disordered; sequence MSTVSDPNSSNPPESAGNIRP. 2 consecutive C4-type zinc fingers follow at residues 43–75 and 261–293; these read CMNC…CDHC and CPSC…CGAC. The tract at residues 414–457 is disordered; the sequence is VQSLSDDDSEPDDKLTVERYDRSYEDNEDLGLNDMKTEGYEEKA. 2 stretches are compositionally biased toward basic and acidic residues: residues 425–438 and 448–457; these read DDKL…RSYE and MKTEGYEEKA.

This sequence belongs to the ZPR1 family.

Might mediate EGFR and FGFR signal transduction cascades required for lumen formation in tracheal cells. The polypeptide is Zinc finger protein ZPR1 (Drosophila melanogaster (Fruit fly)).